The primary structure comprises 204 residues: Cobalt-containing nitrile hydratase subunit alpha (204 aa).

Residues cysteine 108, cysteine 111, serine 112, and cysteine 113 each coordinate Co(2+). Cysteine sulfinic acid (-SO2H) is present on cysteine 111. The residue at position 113 (cysteine 113) is a Cysteine sulfenic acid (-SOH).

It belongs to the nitrile hydratase subunit alpha family. Heterotetramer of two alpha and two beta chains. Co(2+) serves as cofactor.

It catalyses the reaction an aliphatic primary amide = an aliphatic nitrile + H2O. Functionally, NHase catalyzes the hydration of various nitrile compounds to the corresponding amides. The chain is Cobalt-containing nitrile hydratase subunit alpha from Pseudonocardia thermophila.